Here is a 301-residue protein sequence, read N- to C-terminus: tRNA pseudouridine synthase B (301 aa).

Residue Asp47 is the Nucleophile of the active site.

This sequence belongs to the pseudouridine synthase TruB family. Type 1 subfamily.

The enzyme catalyses uridine(55) in tRNA = pseudouridine(55) in tRNA. Its function is as follows. Responsible for synthesis of pseudouridine from uracil-55 in the psi GC loop of transfer RNAs. The sequence is that of tRNA pseudouridine synthase B from Cereibacter sphaeroides (strain ATCC 17025 / ATH 2.4.3) (Rhodobacter sphaeroides).